The sequence spans 133 residues: ATP synthase epsilon chain, chloroplastic (133 aa).

This sequence belongs to the ATPase epsilon chain family. F-type ATPases have 2 components, CF(1) - the catalytic core - and CF(0) - the membrane proton channel. CF(1) has five subunits: alpha(3), beta(3), gamma(1), delta(1), epsilon(1). CF(0) has three main subunits: a, b and c.

It is found in the plastid. It localises to the chloroplast thylakoid membrane. Its function is as follows. Produces ATP from ADP in the presence of a proton gradient across the membrane. In Vitis vinifera (Grape), this protein is ATP synthase epsilon chain, chloroplastic.